Here is a 938-residue protein sequence, read N- to C-terminus: Isoleucine--tRNA ligase (938 aa).

A 'HIGH' region motif is present at residues 58–68 (PYANGSIHIGH). K183 carries the post-translational modification N6-acetyllysine. E561 is an L-isoleucyl-5'-AMP binding site. The 'KMSKS' region motif lies at 602 to 606 (KMSKS). K605 lines the ATP pocket. Residues C901, C904, C921, and C924 each coordinate Zn(2+).

This sequence belongs to the class-I aminoacyl-tRNA synthetase family. IleS type 1 subfamily. As to quaternary structure, monomer. Zn(2+) is required as a cofactor.

It is found in the cytoplasm. The enzyme catalyses tRNA(Ile) + L-isoleucine + ATP = L-isoleucyl-tRNA(Ile) + AMP + diphosphate. In terms of biological role, catalyzes the attachment of isoleucine to tRNA(Ile). As IleRS can inadvertently accommodate and process structurally similar amino acids such as valine, to avoid such errors it has two additional distinct tRNA(Ile)-dependent editing activities. One activity is designated as 'pretransfer' editing and involves the hydrolysis of activated Val-AMP. The other activity is designated 'posttransfer' editing and involves deacylation of mischarged Val-tRNA(Ile). The polypeptide is Isoleucine--tRNA ligase (Shigella boydii serotype 4 (strain Sb227)).